A 122-amino-acid polypeptide reads, in one-letter code: Basic phospholipase A2 Ts-G6D49 (122 aa).

Cystine bridges form between Cys-26/Cys-115, Cys-28/Cys-44, Cys-43/Cys-95, Cys-49/Cys-122, Cys-50/Cys-88, Cys-57/Cys-81, and Cys-75/Cys-86. Ca(2+) is bound by residues Tyr-27, Gly-29, and Gly-31. Residue His-47 is part of the active site. Residue Asp-48 participates in Ca(2+) binding. Residue Asp-89 is part of the active site.

Ca(2+) is required as a cofactor. Expressed by the venom gland.

It is found in the secreted. It catalyses the reaction a 1,2-diacyl-sn-glycero-3-phosphocholine + H2O = a 1-acyl-sn-glycero-3-phosphocholine + a fatty acid + H(+). Its function is as follows. Snake venom phospholipase A2 that induces fast and sustaining local edema a few hours after injection (5-10 ug) in the hind paw, and prolongs the coagulation time of human plasma. Exhibits moderate hydrolytic activities and prefers the zwitterionic micelles (dPPC with Triton X-100) to the anionic micelles (dPPC with deoxycholate). PLA2 catalyzes the calcium-dependent hydrolysis of the 2-acyl groups in 3-sn-phosphoglycerides. The protein is Basic phospholipase A2 Ts-G6D49 of Trimeresurus stejnegeri (Chinese green tree viper).